The following is a 209-amino-acid chain: Uracil phosphoribosyltransferase (209 aa).

5-phospho-alpha-D-ribose 1-diphosphate is bound by residues arginine 77, arginine 102, and 129 to 137 (DPMLATGSS). Uracil contacts are provided by residues isoleucine 192 and 197-199 (GDA). Aspartate 198 contacts 5-phospho-alpha-D-ribose 1-diphosphate.

Belongs to the UPRTase family. Mg(2+) is required as a cofactor.

The catalysed reaction is UMP + diphosphate = 5-phospho-alpha-D-ribose 1-diphosphate + uracil. It functions in the pathway pyrimidine metabolism; UMP biosynthesis via salvage pathway; UMP from uracil: step 1/1. Its activity is regulated as follows. Allosterically activated by GTP. Catalyzes the conversion of uracil and 5-phospho-alpha-D-ribose 1-diphosphate (PRPP) to UMP and diphosphate. The protein is Uracil phosphoribosyltransferase of Metamycoplasma hominis (Mycoplasma hominis).